The primary structure comprises 107 residues: uncharacterized protein (107 aa).

The segment at 23–64 (SASSSSSTRIPSGFASATSSKSNSSTKSSPSPINSFNNKTNN) is disordered. The span at 37–57 (ASATSSKSNSSTKSSPSPINS) shows a compositional bias: low complexity. A helical transmembrane segment spans residues 76 to 98 (LAFGIVEFMVFNGMISTITTTTF).

The protein localises to the membrane. This is an uncharacterized protein from Dictyostelium discoideum (Social amoeba).